A 245-amino-acid chain; its full sequence is Bis(5'-nucleosyl)-tetraphosphatase PrpE [asymmetrical] (245 aa).

It belongs to the PrpE family. The cofactor is Ni(2+).

It catalyses the reaction P(1),P(4)-bis(5'-guanosyl) tetraphosphate + H2O = GMP + GTP + 2 H(+). Functionally, asymmetrically hydrolyzes Ap4p to yield AMP and ATP. The protein is Bis(5'-nucleosyl)-tetraphosphatase PrpE [asymmetrical] of Anoxybacillus flavithermus (strain DSM 21510 / WK1).